Here is a 266-residue protein sequence, read N- to C-terminus: Streptomycin 3''-kinase (266 aa).

The active-site Proton acceptor is aspartate 154.

It belongs to the aminoglycoside phosphotransferase family.

The enzyme catalyses streptomycin + ATP = streptomycin 3''-phosphate + ADP + H(+). The aminoglycoside phosphotransferases achieve inactivation of their antibiotic substrates by phosphorylation. The chain is Streptomycin 3''-kinase (str) from Klebsiella pneumoniae.